The primary structure comprises 258 residues: Imidazole glycerol phosphate synthase subunit HisF (258 aa).

Residues aspartate 11 and aspartate 130 contribute to the active site.

The protein belongs to the HisA/HisF family. Heterodimer of HisH and HisF.

Its subcellular location is the cytoplasm. The catalysed reaction is 5-[(5-phospho-1-deoxy-D-ribulos-1-ylimino)methylamino]-1-(5-phospho-beta-D-ribosyl)imidazole-4-carboxamide + L-glutamine = D-erythro-1-(imidazol-4-yl)glycerol 3-phosphate + 5-amino-1-(5-phospho-beta-D-ribosyl)imidazole-4-carboxamide + L-glutamate + H(+). Its pathway is amino-acid biosynthesis; L-histidine biosynthesis; L-histidine from 5-phospho-alpha-D-ribose 1-diphosphate: step 5/9. Its function is as follows. IGPS catalyzes the conversion of PRFAR and glutamine to IGP, AICAR and glutamate. The HisF subunit catalyzes the cyclization activity that produces IGP and AICAR from PRFAR using the ammonia provided by the HisH subunit. The chain is Imidazole glycerol phosphate synthase subunit HisF from Xanthomonas campestris pv. campestris (strain 8004).